The primary structure comprises 405 residues: MMYEKTAEHFEQKYKNLPEGHLLVNLGPSHPATHGILQNVIQIDGERIVEAESVIGYVHRCFEKLGERYTYNQFLVCTDRMNYVSTPLNNIGWILAVEKMMQVEVPDRVTYVRMIISELSRIMDHIICLGILGVDLGAFSGMLHLFHHRENIYQIIEKLTGARLTTTFCRIGGLERDIYPEFEKEVKLVCKGLKPAIEEFNSLLLKNKIFLGRTEGIGGISAENAIAYGFSGPNLRAAGVDWDVRKDKPYMLYDKVDFDVPIGEDGSVLHRSLVRMEEMRQSIRIIEQLVDGIPSGAWHADLPHAYLPEKNKVYNNMEELIYHFKIIMHGVKVPPGEHYMATEAANGELGFYIISEGEKSPWRVHVRRPCFWYYQSFAELVRGGLLADSVATMSSLNVIAGELDC.

Belongs to the complex I 49 kDa subunit family. As to quaternary structure, NDH-1 is composed of 14 different subunits. Subunits NuoB, C, D, E, F, and G constitute the peripheral sector of the complex.

It is found in the cell inner membrane. It carries out the reaction a quinone + NADH + 5 H(+)(in) = a quinol + NAD(+) + 4 H(+)(out). NDH-1 shuttles electrons from NADH, via FMN and iron-sulfur (Fe-S) centers, to quinones in the respiratory chain. The immediate electron acceptor for the enzyme in this species is believed to be ubiquinone. Couples the redox reaction to proton translocation (for every two electrons transferred, four hydrogen ions are translocated across the cytoplasmic membrane), and thus conserves the redox energy in a proton gradient. The sequence is that of NADH-quinone oxidoreductase subunit D from Leptospira borgpetersenii serovar Hardjo-bovis (strain L550).